Here is a 162-residue protein sequence, read N- to C-terminus: Glutathione peroxidase-like peroxiredoxin 2 (162 aa).

Residue cysteine 37 is the Cysteine sulfenic acid (-SOH) intermediate of the active site. Cysteine 37 and cysteine 83 form a disulfide bridge.

It belongs to the glutathione peroxidase family. In terms of assembly, monomer.

The protein localises to the cytoplasm. The protein resides in the nucleus. It is found in the mitochondrion outer membrane. It localises to the mitochondrion inner membrane. It catalyses the reaction a hydroperoxide + [thioredoxin]-dithiol = an alcohol + [thioredoxin]-disulfide + H2O. Its function is as follows. Glutathione peroxidase-like protein that protects cells from phospholipid hydroperoxides and nonphospholipid peroxides during oxidative stress. Plays an important role in the oxidative stress-induced response in the presence of Ca(2+). Has peroxidase activity using preferentially thioredoxin as a reducing power. The redox state of the mitochondrial GPX2 is regulated by TRX1 and TRX2 (cytoplasmic thioredoxin), and by TRX3 (mitochondrial matrix thioredoxin). Involved in sporulation. The protein is Glutathione peroxidase-like peroxiredoxin 2 of Saccharomyces cerevisiae (strain ATCC 204508 / S288c) (Baker's yeast).